The chain runs to 121 residues: Large ribosomal subunit protein uL22 (121 aa).

The protein belongs to the universal ribosomal protein uL22 family. Part of the 50S ribosomal subunit.

Its function is as follows. This protein binds specifically to 23S rRNA; its binding is stimulated by other ribosomal proteins, e.g. L4, L17, and L20. It is important during the early stages of 50S assembly. It makes multiple contacts with different domains of the 23S rRNA in the assembled 50S subunit and ribosome. Functionally, the globular domain of the protein is located near the polypeptide exit tunnel on the outside of the subunit, while an extended beta-hairpin is found that lines the wall of the exit tunnel in the center of the 70S ribosome. The chain is Large ribosomal subunit protein uL22 from Rickettsia massiliae (strain Mtu5).